A 445-amino-acid chain; its full sequence is UPF0210 protein LACR_1020 (445 aa).

This sequence belongs to the UPF0210 family. In terms of assembly, homodimer.

The chain is UPF0210 protein LACR_1020 from Lactococcus lactis subsp. cremoris (strain SK11).